A 757-amino-acid polypeptide reads, in one-letter code: Tyrosine-protein kinase HTK16 (757 aa).

In terms of domain architecture, SH2 1 spans 10–102; it reads WYHGKITREV…GLPCKLVDFC (93 aa). ANK repeat units lie at residues 115–147, 151–180, 184–214, 219–248, and 252–281; these read GLDTRLHLACEEKNPNTVKELLQDSVIKENVNA, SGLTALHISCSNGDNDIVAMLLNAGADASA, NGRTPVQVVCFYNHASTLHLLISKGSADFLK, NGWVPLHEAAMRGSLECVKVLLSFNASMYP, and DGDTPRDLALQYENYNVVEFFDNYPVNQPK. Residues 287 to 379 form the SH2 2 domain; that stretch reads WLHQNLDRNG…GLPTLLQFPV (93 aa). Disordered regions lie at residues 381–407 and 444–467; these read SAENRKRPLPPTPTKNQLKLPVPPSRP and PKLPRPVVNHTEVPNSVNVGQKGD. The segment covering 455 to 467 has biased composition (polar residues); it reads EVPNSVNVGQKGD. The Protein kinase domain maps to 484–740; that stretch reads ISFGKELGVG…PTFNELHSTF (257 aa). Residues 490 to 498 and lysine 516 contribute to the ATP site; that span reads LGVGEFGSV. The active-site Proton acceptor is aspartate 608. Residue tyrosine 746 is modified to Phosphotyrosine.

Belongs to the protein kinase superfamily. Tyr protein kinase family. As to expression, epithelial cells.

It catalyses the reaction L-tyrosyl-[protein] + ATP = O-phospho-L-tyrosyl-[protein] + ADP + H(+). May be involved in signal transduction. The sequence is that of Tyrosine-protein kinase HTK16 (HTK16) from Hydra vulgaris (Hydra).